The sequence spans 85 residues: uncharacterized protein (85 aa).

It belongs to the BolA/IbaG family.

This is an uncharacterized protein from Haemophilus influenzae (strain ATCC 51907 / DSM 11121 / KW20 / Rd).